The following is a 235-amino-acid chain: Urease accessory protein UreF (235 aa).

This sequence belongs to the UreF family. As to quaternary structure, ureD, UreF and UreG form a complex that acts as a GTP-hydrolysis-dependent molecular chaperone, activating the urease apoprotein by helping to assemble the nickel containing metallocenter of UreC. The UreE protein probably delivers the nickel.

Its subcellular location is the cytoplasm. Required for maturation of urease via the functional incorporation of the urease nickel metallocenter. The chain is Urease accessory protein UreF from Haemophilus influenzae (strain 86-028NP).